A 107-amino-acid chain; its full sequence is Metallothionein-1 (107 aa).

A propeptide spanning residues 1–2 (MD) is cleaved from the precursor.

The protein belongs to the metallothionein superfamily. Type 7 family.

In terms of biological role, the metallothioneins are involved in the cellular sequestration of toxic metal ions. Binds 12 cadmium ions per molecule. This chain is Metallothionein-1, found in Tetrahymena pigmentosa.